A 34-amino-acid polypeptide reads, in one-letter code: Potassium channel toxin alpha-KTx 18.2 (34 aa).

3 cysteine pairs are disulfide-bonded: C7–C26, C12–C31, and C16–C33.

In terms of tissue distribution, expressed by the venom gland.

It is found in the secreted. In terms of biological role, reversibly blocks Shaker B potassium channels. The chain is Potassium channel toxin alpha-KTx 18.2 from Tityus discrepans (Venezuelan scorpion).